We begin with the raw amino-acid sequence, 143 residues long: MAMRSGFLDRRPVLVGLVFLGGCLGTLIRSVIAHAWPSRADGVPWGTLAINLVGAFVLATLLELLVHAGPDRGVRRAVRLCIGTGLLGGFTTYSALTVEAGQRVMSGQWLWGIAYLLTSVAAGALLAWVVIAAVRCVMGKRSS.

Transmembrane regions (helical) follow at residues 13-33 (VLVG…SVIA), 42-62 (GVPW…ATLL), 80-100 (LCIG…TVEA), and 111-131 (WGIA…WVVI). G88 and T91 together coordinate Na(+).

This sequence belongs to the fluoride channel Fluc/FEX (TC 1.A.43) family.

It is found in the cell membrane. It carries out the reaction fluoride(in) = fluoride(out). Na(+) is not transported, but it plays an essential structural role and its presence is essential for fluoride channel function. Fluoride-specific ion channel. Important for reducing fluoride concentration in the cell, thus reducing its toxicity. The protein is Fluoride-specific ion channel FluC 1 of Cutibacterium acnes (strain DSM 16379 / KPA171202) (Propionibacterium acnes).